The following is a 228-amino-acid chain: Transcription repressor OFP8 (228 aa).

3 stretches are compositionally biased toward low complexity: residues 1–14 (MSGRSSRRGSFSLR), 54–79 (ASSTSTTTAFTATTGGAGTATSTDSS), and 92–101 (EEPAAAQQEQ). 2 disordered regions span residues 1–21 (MSGRSSRRGSFSLRQPPVVDI) and 36–143 (SSSS…QLQE). Residues 107-120 (RRRRRQQRRRRRRA) show a composition bias toward basic residues. One can recognise an OVATE domain in the interval 157–216 (VAVESAEPYEDFRESMVQMVVEKEIYAWDDLNDLLHQFLSLNSPRHHPLILHAFADLWTR).

As to quaternary structure, interacts with GSK2. Post-translationally, phosphorylated on serine and threonine residues by GSK2. Dephosphorylated during response to brassinosteroid. Expressed in roots, stems, stem nodes, young leaves, leaf sheaths, lamina joints, young spikelets, inflorescences, stamens and ovaries, embryos and seeds.

It localises to the nucleus. Its subcellular location is the cytoplasm. Its function is as follows. Probable transcriptional repressor that regulates multiple aspects of plant growth and development, partly through brassinosteroid (BR) signaling pathway. Acts downstream of the kinase GSK2, a negative regulator of BR signaling. This is Transcription repressor OFP8 from Oryza sativa subsp. japonica (Rice).